The primary structure comprises 417 residues: NADH-quinone oxidoreductase subunit D (417 aa).

The protein belongs to the complex I 49 kDa subunit family. As to quaternary structure, NDH-1 is composed of 14 different subunits. Subunits NuoB, C, D, E, F, and G constitute the peripheral sector of the complex.

Its subcellular location is the cell inner membrane. It carries out the reaction a quinone + NADH + 5 H(+)(in) = a quinol + NAD(+) + 4 H(+)(out). NDH-1 shuttles electrons from NADH, via FMN and iron-sulfur (Fe-S) centers, to quinones in the respiratory chain. The immediate electron acceptor for the enzyme in this species is believed to be ubiquinone. Couples the redox reaction to proton translocation (for every two electrons transferred, four hydrogen ions are translocated across the cytoplasmic membrane), and thus conserves the redox energy in a proton gradient. This Leptothrix cholodnii (strain ATCC 51168 / LMG 8142 / SP-6) (Leptothrix discophora (strain SP-6)) protein is NADH-quinone oxidoreductase subunit D.